We begin with the raw amino-acid sequence, 815 residues long: Leucine--tRNA ligase (815 aa).

The short motif at Pro-42–His-52 is the 'HIGH' region element. Residues Lys-574–Ser-578 carry the 'KMSKS' region motif. Lys-577 lines the ATP pocket.

This sequence belongs to the class-I aminoacyl-tRNA synthetase family.

Its subcellular location is the cytoplasm. The catalysed reaction is tRNA(Leu) + L-leucine + ATP = L-leucyl-tRNA(Leu) + AMP + diphosphate. This Marinomonas sp. (strain MWYL1) protein is Leucine--tRNA ligase.